The following is a 237-amino-acid chain: Homeobox protein Nkx-3.1 (237 aa).

Over residues Met1 to Ala14 the composition is skewed to basic and acidic residues. Disordered regions lie at residues Met1–Ser96 and Glu108–Ala130. Residues Pro24 to Leu34 are compositionally biased toward polar residues. Basic and acidic residues-rich tracts occupy residues Ile38 to Gly47 and Pro57 to Gly71. The homeobox DNA-binding region spans Gln125 to Gln184.

Belongs to the NK-3 homeobox family. As to quaternary structure, interacts with serum response factor (SRF). Interacts with SPDEF. Interacts with WDR77. Interacts with TOPORS which polyubiquitinates NKX3-1 and induces its proteasomal degradation. Interacts with FEM1B. Ubiquitinated by TOPORS; monoubiquitinated at several residues and also polyubiquitinated on single residues. In terms of tissue distribution, expressed mostly in the male urogenital tract, with highest expression in the epithelial cells lining the ducts of anterior, dorsolateral and ventral prostate and in the bulbourethral gland, and much lower in the seminal vesicle and the testis. Expression in the prostate increases during sexual maturation and is drastically reduced following castration. Expressed also in brain (hippocampus and external granular layer of the cerebral cortex), kidney (intralobular arteries), thymus and adrenal and salivary glands.

Its subcellular location is the nucleus. In terms of biological role, transcription factor, which binds preferentially the consensus sequence 5'-TAAGT[AG]-3' and can behave as a transcriptional repressor. Plays an important role in normal prostate development, regulating proliferation of glandular epithelium and in the formation of ducts in prostate. Acts as a tumor suppressor controlling prostate carcinogenesis, as shown by the ability to suppress growth and tumorigenicity of prostate carcinoma cells. Plays a role in the formation of minor salivary glands (particularly palatine and lingual glands). The protein is Homeobox protein Nkx-3.1 of Mus musculus (Mouse).